A 2242-amino-acid polypeptide reads, in one-letter code: Transcription factor sma-9 (2242 aa).

Residues 120 to 383 (HQLAQQQAQQ…QQAQQAQLAQ (264 aa)) adopt a coiled-coil conformation. The span at 317–330 (AAQQAQAQNNASQQ) shows a compositional bias: low complexity. Disordered regions lie at residues 317-344 (AAQQ…SSTP), 494-553 (TPVA…SMSD), 583-617 (GAQS…SRSQ), 712-754 (LAAH…SSFP), and 1323-1349 (EDST…SPPL). Polar residues predominate over residues 331–344 (RPSVASTPALSSTP). Low complexity-rich tracts occupy residues 494–523 (TPVA…ATSS) and 539–550 (SSSKAASSGNES). The segment covering 583–601 (GAQSSVDHDSNSGGSTRTS) has biased composition (polar residues). Over residues 1324 to 1338 (DSTSAEPSTSGQSLL) the composition is skewed to polar residues. 5 consecutive C2H2-type zinc fingers follow at residues 1447–1469 (YICD…IKSH), 1475–1499 (FNCT…SKTH), 1700–1722 (LKCD…QHTH), 1734–1760 (YQCS…HGVH), and 1790–1814 (FMCV…SKTH). The span at 2029-2039 (SITSPIVSSST) shows a compositional bias: low complexity. Disordered stretches follow at residues 2029-2059 (SITS…PTHT) and 2085-2107 (STDK…PRPI). Over residues 2085–2099 (STDKAHASESLSDRL) the composition is skewed to basic and acidic residues. 2 C2H2-type zinc fingers span residues 2111-2134 (TKCQ…HVDH) and 2143-2167 (YKCP…VTAH). Residues 2219–2242 (HELYAQTQQGAGSSTSNQSPKAAN) are disordered. The span at 2223–2242 (AQTQQGAGSSTSNQSPKAAN) shows a compositional bias: polar residues.

As to expression, expressed in the ventral nerve cord (VNC), pharynx, intestine and seam cells (at protein level).

Its subcellular location is the nucleus. Transcription factor, probably acting as a transcriptional activator and repressor, involved in the TGF-beta-like dbl-1 signaling pathway. Plays a role in regulation of body size, and patterning of male-specific genital sensilla (simple sense organs), known as rays, and mating-associated structures, spicules. Required for the dorsoventral patterning of the postembryonic mesodermal lineage (M lineage), acting by antagonizing the TGF-beta-like dbl-1 signaling pathway, in part by repressing expression of transcription factor unc-130. Involved in egg-laying, perhaps via modulation of cholinergic neurotransmission. Involved in production of reactive oxygen species (ROS), acting downstream of the dbl-1 signaling pathway. Plays a role in the mitochondrial unfolded protein response (mtUPR). May play a role in modulating lifespan and in responses to proteotoxic stress. Its function is as follows. Transcription factor, probably acting as a transcriptional activator. Required for patterning of male-specific genital sensilla (simple sense organs), known as rays. Dispensable for regulation of body size. The polypeptide is Transcription factor sma-9 (Caenorhabditis elegans).